Reading from the N-terminus, the 1044-residue chain is Isoleucine--tRNA ligase (1044 aa).

A 'HIGH' region motif is present at residues 48 to 58; it reads PFATGLPHFGH. The short motif at 594–598 is the 'KMSKS' region element; the sequence is KMSKS. ATP is bound at residue lysine 597.

The protein belongs to the class-I aminoacyl-tRNA synthetase family. IleS type 2 subfamily. Monomer. The cofactor is Zn(2+).

The protein resides in the cytoplasm. It catalyses the reaction tRNA(Ile) + L-isoleucine + ATP = L-isoleucyl-tRNA(Ile) + AMP + diphosphate. In terms of biological role, catalyzes the attachment of isoleucine to tRNA(Ile). As IleRS can inadvertently accommodate and process structurally similar amino acids such as valine, to avoid such errors it has two additional distinct tRNA(Ile)-dependent editing activities. One activity is designated as 'pretransfer' editing and involves the hydrolysis of activated Val-AMP. The other activity is designated 'posttransfer' editing and involves deacylation of mischarged Val-tRNA(Ile). This is Isoleucine--tRNA ligase from Borrelia duttonii (strain Ly).